We begin with the raw amino-acid sequence, 508 residues long: Ribonuclease Y (508 aa).

The KH domain maps to 198-264 (TVSVINLPND…RLTIEKLITD (67 aa)). One can recognise an HD domain in the interval 324-417 (VLTHSIEVAK…VQAADAVSAS (94 aa)).

Belongs to the RNase Y family.

Endoribonuclease that initiates mRNA decay. This chain is Ribonuclease Y, found in Fusobacterium nucleatum subsp. nucleatum (strain ATCC 25586 / DSM 15643 / BCRC 10681 / CIP 101130 / JCM 8532 / KCTC 2640 / LMG 13131 / VPI 4355).